We begin with the raw amino-acid sequence, 135 residues long: Small ribosomal subunit protein uS9 (135 aa).

This sequence belongs to the universal ribosomal protein uS9 family.

In Archaeoglobus fulgidus (strain ATCC 49558 / DSM 4304 / JCM 9628 / NBRC 100126 / VC-16), this protein is Small ribosomal subunit protein uS9 (rps9).